A 659-amino-acid polypeptide reads, in one-letter code: tRNA-guanine(15) transglycosylase (659 aa).

The active-site Nucleophile is the D84. Residues D119 and A190 each coordinate substrate. The Zn(2+) site is built by C273, C275, and C278. The PUA domain maps to 583-658; that stretch reads KNRVVVNKDS…QAIKTRKGMK (76 aa).

Belongs to the archaeosine tRNA-ribosyltransferase family. It depends on Zn(2+) as a cofactor.

The enzyme catalyses guanosine(15) in tRNA + 7-cyano-7-deazaguanine = 7-cyano-7-carbaguanosine(15) in tRNA + guanine. The protein operates within tRNA modification; archaeosine-tRNA biosynthesis. Exchanges the guanine residue with 7-cyano-7-deazaguanine (preQ0) at position 15 in the dihydrouridine loop (D-loop) of archaeal tRNAs. This is tRNA-guanine(15) transglycosylase from Methanobrevibacter smithii (strain ATCC 35061 / DSM 861 / OCM 144 / PS).